A 172-amino-acid polypeptide reads, in one-letter code: Small ribosomal subunit protein bS16 (172 aa).

The tract at residues 125-172 (KKRKAKEEAEAKAAAEKAAEEAAAAEAAKAEEEAAKAEEADSAEESAE) is disordered. Basic and acidic residues-rich tracts occupy residues 129–144 (AKEE…KAAE) and 152–163 (AKAEEEAAKAEE).

This sequence belongs to the bacterial ribosomal protein bS16 family.

This Corynebacterium aurimucosum (strain ATCC 700975 / DSM 44827 / CIP 107346 / CN-1) (Corynebacterium nigricans) protein is Small ribosomal subunit protein bS16.